Reading from the N-terminus, the 961-residue chain is ATPase 7, plasma membrane-type (961 aa).

Residues 1-64 (MTDIEALKAI…EKKESKILKF (64 aa)) are Cytoplasmic-facing. The chain crosses the membrane as a helical span at residues 65-84 (LGFMWNPLSWVMEAAALMAI). Residues 85-96 (GLAHGGGKPADY) lie on the Extracellular side of the membrane. A helical membrane pass occupies residues 97–117 (HDFVGIVVLLLINSTISFVEE). Topologically, residues 118–246 (NNAGNAAAAL…GHFQKVLTAI (129 aa)) are cytoplasmic. Residues 247–267 (GNFCICSIAVGMAIEIVVIYG) form a helical membrane-spanning segment. The Extracellular segment spans residues 268–276 (LQKRGYRVG). Residues 277–294 (IDNLLVLLIGGIPIAMPT) traverse the membrane as a helical segment. The Cytoplasmic portion of the chain corresponds to 295–643 (VLSVTMAIGA…TSRAIFQRMK (349 aa)). The active-site 4-aspartylphosphate intermediate is the D332. Positions 588 and 592 each coordinate Mg(2+). Residues 644 to 665 (NYTIYAVSITIRIVMGFMLLCV) form a helical membrane-spanning segment. Topologically, residues 666–670 (FWEFD) are extracellular. Residues 671 to 693 (FPPFMVLVIAILNDGTIMTISKD) form a helical membrane-spanning segment. The Cytoplasmic portion of the chain corresponds to 694–709 (RVKPSPTPDCWKLKEI). A helical transmembrane segment spans residues 710–730 (FATGVVLGAYLAIMTVVFFWA). Residues 731 to 764 (AYETNFFHNIFHVRNFNQHHFKMKDKKVAAHLNE) lie on the Extracellular side of the membrane. Residues 765–785 (QMASAVYLQVSTISQALIFVT) form a helical membrane-spanning segment. The Cytoplasmic portion of the chain corresponds to 786–797 (RSRSWSFVERPG). Residues 798-818 (FLLVIAFLIAQLVASVISAMA) traverse the membrane as a helical segment. Over 819 to 826 (NWPFAGIR) the chain is Extracellular. Residues 827–847 (SIGWGWTGVIWIFNIVTYMLL) form a helical membrane-spanning segment. Topologically, residues 848-961 (DPIKFLVRYA…EDPNSNNYTI (114 aa)) are cytoplasmic. T894 carries the phosphothreonine modification. A phosphoserine mark is found at S910 and S942. Residues 959-961 (YTI) are interaction with 14-3-3 proteins. A Phosphothreonine modification is found at T960.

This sequence belongs to the cation transport ATPase (P-type) (TC 3.A.3) family. Type IIIA subfamily. As to quaternary structure, binds to 14-3-3 proteins. The binding is induced by phosphorylation of Thr-960. Binding to 14-3-3 proteins activates the H(+)-ATPase. In terms of tissue distribution, expressed in guard cells, roots and leaves, and barely in mesophyll cells.

Its subcellular location is the membrane. It carries out the reaction ATP + H2O + H(+)(in) = ADP + phosphate + 2 H(+)(out). In terms of biological role, the plasma membrane H(+) ATPase of plants and fungi generates a proton gradient that drives the active transport of nutrients by H(+)-symport. The resulting external acidification and/or internal alkinization may mediate growth responses. This Arabidopsis thaliana (Mouse-ear cress) protein is ATPase 7, plasma membrane-type (AHA7).